A 523-amino-acid polypeptide reads, in one-letter code: Sucrose 6(F)-phosphate phosphorylase (523 aa).

Sucrose 6(F)-phosphate contacts are provided by residues aspartate 58, histidine 96, 221-223 (RLD), glutamate 264, 326-327 (HD), and lysine 434. Aspartate 223 serves as the catalytic Nucleophile. Glutamate 264 acts as the Proton donor/acceptor in catalysis.

The protein belongs to the glycosyl hydrolase 13 family. Sucrose phosphorylase subfamily. Monomer.

The catalysed reaction is sucrose 6(F)-phosphate + phosphate = beta-D-fructose 6-phosphate + alpha-D-glucose 1-phosphate. Catalyzes the reversible phosphorolysis of sucrose 6(F)-phosphate into alpha-D-glucose 1-phosphate (Glc1P) and D-fructose 6-phosphate. May be involved in a new pathway for the degradation of sucrose, which could become phosphorylated on its fructose moiety during uptake via a PTS system. Shows strict specificity since it does not catalyze reactions with alternative substrates. In Ilumatobacter coccineus (strain NBRC 103263 / KCTC 29153 / YM16-304), this protein is Sucrose 6(F)-phosphate phosphorylase.